We begin with the raw amino-acid sequence, 986 residues long: Translation initiation factor IF-2 (986 aa).

The tract at residues 95-394 (TFVRRDETSA…GRGKHQDQNT (300 aa)) is disordered. Over residues 122 to 182 (ELQRREEEAR…EEEAAKKRAA (61 aa)) the composition is skewed to basic and acidic residues. The span at 183 to 222 (AEAAAREQAQAAKPAQAAQPAAAKAEPVAAKAAEPAVAKQ) shows a compositional bias: low complexity. A compositionally biased stretch (basic and acidic residues) spans 228–277 (ERAAAERAAQREAAKKAEDAARQAAEKARAEQEQIAKRRAAAEAEARAIR). Low complexity predominate over residues 320–342 (APSRPAAKKPAAAAPAATTTPSA). Residues 371–384 (TSGGVDRGWRGGPK) are compositionally biased toward gly residues. The tr-type G domain occupies 486 to 655 (PRPPVVTVMG…LLQAEVLELK (170 aa)). A G1 region spans residues 495-502 (GHVDHGKT). 495–502 (GHVDHGKT) lines the GTP pocket. Residues 520-524 (GITQH) are G2. The segment at 541-544 (DTPG) is G3. GTP contacts are provided by residues 541-545 (DTPGH) and 595-598 (NKID). A G4 region spans residues 595-598 (NKID). The G5 stretch occupies residues 631–633 (SAK).

This sequence belongs to the TRAFAC class translation factor GTPase superfamily. Classic translation factor GTPase family. IF-2 subfamily.

It localises to the cytoplasm. One of the essential components for the initiation of protein synthesis. Protects formylmethionyl-tRNA from spontaneous hydrolysis and promotes its binding to the 30S ribosomal subunits. Also involved in the hydrolysis of GTP during the formation of the 70S ribosomal complex. This chain is Translation initiation factor IF-2, found in Paraburkholderia phytofirmans (strain DSM 17436 / LMG 22146 / PsJN) (Burkholderia phytofirmans).